The following is a 189-amino-acid chain: Probable nicotinate-nucleotide adenylyltransferase (189 aa).

This sequence belongs to the NadD family.

The enzyme catalyses nicotinate beta-D-ribonucleotide + ATP + H(+) = deamido-NAD(+) + diphosphate. Its pathway is cofactor biosynthesis; NAD(+) biosynthesis; deamido-NAD(+) from nicotinate D-ribonucleotide: step 1/1. In terms of biological role, catalyzes the reversible adenylation of nicotinate mononucleotide (NaMN) to nicotinic acid adenine dinucleotide (NaAD). In Staphylococcus aureus (strain bovine RF122 / ET3-1), this protein is Probable nicotinate-nucleotide adenylyltransferase.